The following is a 231-amino-acid chain: 7-cyano-7-deazaguanine synthase (231 aa).

Phenylalanine 8–leucine 18 lines the ATP pocket. Positions 187, 196, 199, and 202 each coordinate Zn(2+).

It belongs to the QueC family. Zn(2+) is required as a cofactor.

The catalysed reaction is 7-carboxy-7-deazaguanine + NH4(+) + ATP = 7-cyano-7-deazaguanine + ADP + phosphate + H2O + H(+). It participates in purine metabolism; 7-cyano-7-deazaguanine biosynthesis. In terms of biological role, catalyzes the ATP-dependent conversion of 7-carboxy-7-deazaguanine (CDG) to 7-cyano-7-deazaguanine (preQ(0)). In Vibrio cholerae serotype O1 (strain ATCC 39541 / Classical Ogawa 395 / O395), this protein is 7-cyano-7-deazaguanine synthase.